Consider the following 154-residue polypeptide: NADPH-dependent 7-cyano-7-deazaguanine reductase (154 aa).

Catalysis depends on Cys54, which acts as the Thioimide intermediate. Asp61 (proton donor) is an active-site residue. Residues 76-78 (VES) and 95-96 (HE) each bind substrate.

The protein belongs to the GTP cyclohydrolase I family. QueF type 1 subfamily.

It is found in the cytoplasm. The enzyme catalyses 7-aminomethyl-7-carbaguanine + 2 NADP(+) = 7-cyano-7-deazaguanine + 2 NADPH + 3 H(+). It functions in the pathway tRNA modification; tRNA-queuosine biosynthesis. Its function is as follows. Catalyzes the NADPH-dependent reduction of 7-cyano-7-deazaguanine (preQ0) to 7-aminomethyl-7-deazaguanine (preQ1). This is NADPH-dependent 7-cyano-7-deazaguanine reductase from Porphyromonas gingivalis (strain ATCC 33277 / DSM 20709 / CIP 103683 / JCM 12257 / NCTC 11834 / 2561).